A 1254-amino-acid polypeptide reads, in one-letter code: Juxtamembrane domain-associated catenin (1254 aa).

3 disordered regions span residues 1–38 (MISS…TMRK), 84–106 (AGPT…DNPP), and 145–209 (PYSN…SAPG). Residues 12-22 (PIPEEGTEADG) show a composition bias toward acidic residues. Polar residues predominate over residues 145-157 (PYSNIDFDSSGLP). Fibronectin type-III domains follow at residues 207-302 (APGV…IPIS), 315-411 (APGR…IRPA), 428-518 (PPGQ…LRPT), and 530-624 (ILEA…IEPS). Residues 412–433 (APQRHVPARKVSESVQPPGQPQ) are disordered. Residues 662–685 (MVRESPPLPERDDSPPPLRRANNN) are disordered. ARM repeat units lie at residues 733 to 775 (GGIP…AVME), 777 to 820 (DGVR…ESAT), 874 to 922 (NLIE…YDPA), 969 to 1012 (HVVK…RAAV), and 1016 to 1058 (KGLP…KYAL). The segment at 920–960 (DPAAAHSSSSKNMKHVASPKPEKKKKDKEKKKDKNPKNIVT) is disordered. Residues 1159 to 1254 (GTARRGDSST…GGGNIDDSWV (96 aa)) are disordered. Residues 1166 to 1176 (SSTLARPISSQ) are compositionally biased toward polar residues. A compositionally biased stretch (basic and acidic residues) spans 1177–1187 (GRERPSMHQLD).

This sequence belongs to the beta-catenin family. As to quaternary structure, associated with the catenin-cadherin complex consisting of hmr-1, hmp-1 and hmp-2. Interacts with hmr-1. Interacts with picc-1. In terms of tissue distribution, epidermal cells.

Its subcellular location is the cell junction. It localises to the adherens junction. The protein resides in the nucleus. In terms of biological role, may act as a positive modulator of hmr-1 function during epidermal morphogenesis. Required for proper localization of other junctional components, such as pac-1. In Caenorhabditis elegans, this protein is Juxtamembrane domain-associated catenin (jac-1).